Here is a 199-residue protein sequence, read N- to C-terminus: Imidazoleglycerol-phosphate dehydratase (199 aa).

It belongs to the imidazoleglycerol-phosphate dehydratase family.

Its subcellular location is the cytoplasm. The enzyme catalyses D-erythro-1-(imidazol-4-yl)glycerol 3-phosphate = 3-(imidazol-4-yl)-2-oxopropyl phosphate + H2O. The protein operates within amino-acid biosynthesis; L-histidine biosynthesis; L-histidine from 5-phospho-alpha-D-ribose 1-diphosphate: step 6/9. This is Imidazoleglycerol-phosphate dehydratase from Methylibium petroleiphilum (strain ATCC BAA-1232 / LMG 22953 / PM1).